Here is a 94-residue protein sequence, read N- to C-terminus: RxLR effector protein PITG_15972 (94 aa).

A signal peptide spans 1-21 (MRAVYILAMACAATLQASSSA). Residues 50–65 (RLLRVEDKEEETEEER) carry the RxLR-dEER motif.

It belongs to the RxLR effector family.

Its subcellular location is the secreted. The protein resides in the host cytoplasm. It is found in the host nucleus. Effector that enhances P.infestans colonization of Nicotiana benthamiana leaves. The chain is RxLR effector protein PITG_15972 from Phytophthora infestans (strain T30-4) (Potato late blight agent).